We begin with the raw amino-acid sequence, 663 residues long: UvrABC system protein B (663 aa).

Positions 1-10 (MIDKRDDKPF) are enriched in basic and acidic residues. The interval 1–23 (MIDKRDDKPFKLKSKYKPSGDQP) is disordered. Residues 31–418 (DNIEGGEKAQ…TNTIIEQIIR (388 aa)) form the Helicase ATP-binding domain. 44–51 (GATGTGKT) contacts ATP. The Beta-hairpin motif lies at 97 to 120 (YYDYYQPEAYVPSSDTYIEKDSSV). Residues 435–601 (QMDDLLGEIN…TIKKDIRGLI (167 aa)) enclose the Helicase C-terminal domain. The UVR domain occupies 627–662 (KEAINALQKQMQEAAELLDFELAAQMRDLILELKLM).

Belongs to the UvrB family. In terms of assembly, forms a heterotetramer with UvrA during the search for lesions. Interacts with UvrC in an incision complex.

Its subcellular location is the cytoplasm. Its function is as follows. The UvrABC repair system catalyzes the recognition and processing of DNA lesions. A damage recognition complex composed of 2 UvrA and 2 UvrB subunits scans DNA for abnormalities. Upon binding of the UvrA(2)B(2) complex to a putative damaged site, the DNA wraps around one UvrB monomer. DNA wrap is dependent on ATP binding by UvrB and probably causes local melting of the DNA helix, facilitating insertion of UvrB beta-hairpin between the DNA strands. Then UvrB probes one DNA strand for the presence of a lesion. If a lesion is found the UvrA subunits dissociate and the UvrB-DNA preincision complex is formed. This complex is subsequently bound by UvrC and the second UvrB is released. If no lesion is found, the DNA wraps around the other UvrB subunit that will check the other stand for damage. The protein is UvrABC system protein B of Streptococcus pyogenes serotype M28 (strain MGAS6180).